Consider the following 162-residue polypeptide: MNTKFPITAKGFEKLEHELKHLKHVERKKISADIAEAREHGDLSENAEYEAAREKQAFIEGRIKELEDMTARAEIIDIGKLSGDNIKFGATVTLIDDDTEEEVTYIIVGEYEADITRKRVSIASPIAKALIGKSVGDFVEVTTPKGSKSYEVVTVEYKELEL.

Residues 45–74 (ENAEYEAAREKQAFIEGRIKELEDMTARAE) adopt a coiled-coil conformation.

This sequence belongs to the GreA/GreB family.

Functionally, necessary for efficient RNA polymerase transcription elongation past template-encoded arresting sites. The arresting sites in DNA have the property of trapping a certain fraction of elongating RNA polymerases that pass through, resulting in locked ternary complexes. Cleavage of the nascent transcript by cleavage factors such as GreA or GreB allows the resumption of elongation from the new 3'terminus. GreA releases sequences of 2 to 3 nucleotides. In Rickettsia conorii (strain ATCC VR-613 / Malish 7), this protein is Transcription elongation factor GreA.